A 209-amino-acid chain; its full sequence is 3-demethoxyubiquinol 3-hydroxylase (209 aa).

Fe cation is bound by residues E58, E88, H91, E140, E172, and H175.

Belongs to the COQ7 family. The cofactor is Fe cation.

It is found in the cell membrane. It catalyses the reaction a 5-methoxy-2-methyl-3-(all-trans-polyprenyl)benzene-1,4-diol + AH2 + O2 = a 3-demethylubiquinol + A + H2O. It functions in the pathway cofactor biosynthesis; ubiquinone biosynthesis. Its function is as follows. Catalyzes the hydroxylation of 2-nonaprenyl-3-methyl-6-methoxy-1,4-benzoquinol during ubiquinone biosynthesis. The chain is 3-demethoxyubiquinol 3-hydroxylase from Polynucleobacter asymbioticus (strain DSM 18221 / CIP 109841 / QLW-P1DMWA-1) (Polynucleobacter necessarius subsp. asymbioticus).